The primary structure comprises 472 residues: MAFTAFLLLLSSIAAGFLLLLRRTRYRRMGLPPGSLGLPLIGETFQLIGAYKTENPEPFIDERVARYGSVFMTHLFGEPTIFSADPETNRFVLQNEGKLFECSYPASICNLLGKHSLLLMKGSLHKRMHSLTMSFANSSIIKDHLMLDIDRLVRFNLDSWSSRVLLMEEAKKITFELTVKQLMSFDPGEWSESLRKEYLLVIEGFFSLPLPLFSTTYRKAIQARRKVAEALTVVVMKRREEEEEGAERKKDMLAALLAADDGFSDEEIVDFLVALLVAGYETTSTIMTLAVKFLTETPLALAQLKEEHEKIRAMKSDSYSLEWSDYKSMPFTQCVVNETLRVANIIGGVFRRAMTDVEIKGYKIPKGWKVFSSFRAVHLDPNHFKDARTFNPWRWQSNSVTTGPSNVFTPFGGGPRLCPGYELARVALSVFLHRLVTGFSWVPAEQDKLVFFPTTRTQKRYPIFVKRRDFAT.

Residues 1–21 (MAFTAFLLLLSSIAAGFLLLL) form a helical membrane-spanning segment. C418 provides a ligand contact to heme.

This sequence belongs to the cytochrome P450 family. Heme is required as a cofactor.

The protein localises to the membrane. The enzyme catalyses (22S)-22-hydroxycampesterol + reduced [NADPH--hemoprotein reductase] + O2 = (22S)-22-hydroxycampest-4-en-3-one + oxidized [NADPH--hemoprotein reductase] + 2 H2O + H(+). It carries out the reaction 6-deoxoteasterone + reduced [NADPH--hemoprotein reductase] + O2 = 3-dehydro-6-deoxoteasterone + oxidized [NADPH--hemoprotein reductase] + 2 H2O + H(+). The catalysed reaction is 6-deoxycathasterone + reduced [NADPH--hemoprotein reductase] + O2 = (22S,24R)-22-hydroxy-5alpha-ergostan-3-one + oxidized [NADPH--hemoprotein reductase] + 2 H2O + H(+). It catalyses the reaction (22R,23R)-22,23-dihydroxycampesterol + reduced [NADPH--hemoprotein reductase] + O2 = (22R,23R)-22,23-dihydroxycampest-4-en-3-one + oxidized [NADPH--hemoprotein reductase] + 2 H2O + H(+). Its pathway is plant hormone biosynthesis; brassinosteroid biosynthesis. Catalyzes C3-oxidation steps in brassinosteroids biosynthesis. Converts (22S)-22-hydroxycampesterol (22-OHCR) to (22S,24R)-22-hydroxyergost-4-en-3-one (22-hydroxy-campesta-4-en-3-one, 22-OH-4-en-3-one), 6-deoxocathasterone (6-deoxoCT) to (22S,24R)-22-hydroxy-5alpha-ergostan-3-one (22-hydroxy-campesta-3-one, 22-OH-3-one), (22R,23R)-22,23-dihydroxycampesterol (22,23-diOHCR) to (22R,23R)-22,23-dihydroxy-campest-4-en-3-one (22,23-diOH-4-en-3-one), and 6-deoxoteasterone (6-deoxoTE) to 3-dehydro-6-deoxoteasterone (6-deoxo3DT, 6-deoxo-3-DHT). The polypeptide is 3beta,22alpha-dihydroxysteroid 3-dehydrogenase (Arabidopsis thaliana (Mouse-ear cress)).